A 416-amino-acid polypeptide reads, in one-letter code: Thyroid hormone receptor alpha (416 aa).

The segment covering 1–13 (MEPMSNKQDSNSS) has biased composition (polar residues). The tract at residues 1-37 (MEPMSNKQDSNSSEGDEKGWPDVPKRKRKNSQCSMKS) is disordered. The tract at residues 1–58 (MEPMSNKQDSNSSEGDEKGWPDVPKRKRKNSQCSMKSMSALSVSVPGYIPSYLEKDEP) is modulating. Basic and acidic residues predominate over residues 15–24 (GDEKGWPDVP). Positions 59, 62, 76, 79, 97, 103, 113, and 116 each coordinate Zn(2+). NR C4-type zinc fingers lie at residues 59-79 (CVVC…CEGC) and 97-121 (CKYE…FKKC). A DNA-binding region (nuclear receptor) is located at residues 59-133 (CVVCGDKATG…VGMAMDLVLD (75 aa)). The region spanning 169 to 413 (AEWELIRMAT…PPLFLEVFED (245 aa)) is the NR LBD domain. 3,3',5-triiodo-L-thyronine is bound at residue R234.

The protein belongs to the nuclear hormone receptor family. NR1 subfamily.

Its subcellular location is the nucleus. Its function is as follows. Nuclear hormone receptor that can act as a repressor or activator of transcription. High affinity receptor for thyroid hormones, including triiodothyronine and thyroxine. The polypeptide is Thyroid hormone receptor alpha (thra) (Hippoglossus hippoglossus (Atlantic halibut)).